The chain runs to 513 residues: Cytochrome P450 72A552 (513 aa).

Residues 2–22 form a helical membrane-spanning segment; that stretch reads EISVASVTVSVVIAVVTWWVW. Cys460 is a heme binding site.

This sequence belongs to the cytochrome P450 family. It depends on heme as a cofactor.

Its subcellular location is the membrane. It catalyses the reaction oleanolate + reduced [NADPH--hemoprotein reductase] + O2 = hederagenin + oxidized [NADPH--hemoprotein reductase] + H2O + H(+). Functionally, catalyzes the oxidation of oleanolate at the C-23 position to form hederagenin. The polypeptide is Cytochrome P450 72A552 (Barbarea vulgaris (Yellow rocket)).